A 997-amino-acid polypeptide reads, in one-letter code: MERDEYQLPNSHGKNTFLSRIFGLQSDEVNPSLNSQEMSNFPLPDIERGSSLLHSTNDSREDVDENDLRVPESDQGTSTEEEDEVDEEQVQAYAPQISDGLNGDHQLNSVTSKENVLETEKSNLERLVEGSTDDSVPKVGQLSSEEEEDNEFINNDGFDDDTPLFQKSKIHEFSSKKSNTIEDGKRPLFFRHIYQNNRPQRDTQKLFTSSNAIHHDKDKSANNGPRNINGNQKHGTKYFGSATQPRFTGSPLNNTNRFTKLFPLRKPNLLSNISVLNNTPEDRINTLSVKERALWKWANVENLDIFLQDVYNYYLGNGFYCIILEKILNICTLLFVVFVSTYMGHCVDYSKLPTSHRVSDIIIDKCYSNSITGFTKFFLWMFYFFVILKIVQLYFDVQKLSELQNFYKYLLNISDDELQTLPWQNVIQQLMYLKDQNAMTANVVEVKAKNRIDAHDVANRIMRRENYLIALYNSDILNLSLPIPLFRTNVLTKTLEWNINLCVMGFVFNESGFIKQSILKPSQREFTREELQKRFMLAGFLNIILAPFLVTYFVLLYFFRYFNEYKTSPGSIGARQYTPIAEWKFREYNELYHIFKKRISLSTTLANKYVDQFPKEKTNLFLKFVSFICGSFVAILAFLTVFDPENFLNFEITSDRSVIFYITILGAIWSVSRNTITQEYHVFDPEETLKELYEYTHYLPKEWEGRYHKEEIKLEFCKLYNLRIVILLRELTSLMITPFVLWFSLPSSAGRIVDFFRENSEYVDGLGYVCKYAMFNMKNIDGEDTHSMDEDSLTKKIAVNGSHTLNSKRRSKFTAEDHSDKDLANNKMLQSYVYFMDDYSNSENLTGKYQLPAKKGYPNNEGDSFLNNKYSWRKQFQPGQKPELFRIGKHALGPGHNISPAIYSTRNPGKNWDNNNNGDDIKNGTNNATAKNDDNNGNNDHEYVLTESFLDSGAFPNHDVIDHNKMLNSNYNGNGILNKGGVLGLVKEYYKKSDVGR.

The Cytoplasmic segment spans residues 1 to 318 (MERDEYQLPN…DVYNYYLGNG (318 aa)). A Phosphoserine modification is found at Ser19. Polar residues predominate over residues 29-39 (VNPSLNSQEMS). The disordered stretch occupies residues 29 to 88 (VNPSLNSQEMSNFPLPDIERGSSLLHSTNDSREDVDENDLRVPESDQGTSTEEEDEVDEE). The span at 79–88 (TEEEDEVDEE) shows a compositional bias: acidic residues. Glycyl lysine isopeptide (Lys-Gly) (interchain with G-Cter in ubiquitin) cross-links involve residues Lys113 and Lys121. Position 122 is a phosphoserine (Ser122). Disordered stretches follow at residues 127–159 (LVEG…DGFD) and 214–234 (HHDK…NQKH). Residue Lys138 forms a Glycyl lysine isopeptide (Lys-Gly) (interchain with G-Cter in ubiquitin) linkage. Residues Ser143 and Ser144 each carry the phosphoserine modification. Acidic residues predominate over residues 144-159 (SEEEEDNEFINNDGFD). Over residues 221–233 (ANNGPRNINGNQK) the composition is skewed to polar residues. A helical transmembrane segment spans residues 319 to 339 (FYCIILEKILNICTLLFVVFV). Topologically, residues 340 to 376 (STYMGHCVDYSKLPTSHRVSDIIIDKCYSNSITGFTK) are lumenal. The chain crosses the membrane as a helical span at residues 377 to 397 (FFLWMFYFFVILKIVQLYFDV). Residues 398–538 (QKLSELQNFY…EELQKRFMLA (141 aa)) lie on the Cytoplasmic side of the membrane. Residues 539-559 (GFLNIILAPFLVTYFVLLYFF) lie within the membrane without spanning it. The Cytoplasmic portion of the chain corresponds to 560–620 (RYFNEYKTSP…DQFPKEKTNL (61 aa)). Residues 621 to 641 (FLKFVSFICGSFVAILAFLTV) traverse the membrane as a helical segment. The Lumenal segment spans residues 642–656 (FDPENFLNFEITSDR). Residue Ser657 is modified to Phosphoserine. The helical transmembrane segment at 657–677 (SVIFYITILGAIWSVSRNTIT) threads the bilayer. Residues 678 to 723 (QEYHVFDPEETLKELYEYTHYLPKEWEGRYHKEEIKLEFCKLYNLR) lie on the Cytoplasmic side of the membrane. Lys701 participates in a covalent cross-link: Glycyl lysine isopeptide (Lys-Gly) (interchain with G-Cter in ubiquitin). An intramembrane segment occupies 724–744 (IVILLRELTSLMITPFVLWFS). Over 745-997 (LPSSAGRIVD…EYYKKSDVGR (253 aa)) the chain is Cytoplasmic. Phosphoserine occurs at positions 787 and 792. Thr794 is modified (phosphothreonine). The residue at position 802 (Ser802) is a Phosphoserine. Thr804 carries the phosphothreonine modification. A phosphoserine mark is found at Ser831, Ser842, Ser864, Ser948, and Ser969.

It belongs to the ATG9 family. Homotrimer; forms a homotrimer with a central pore that forms a path between the two membrane leaflets. Interacts with ATG23 and ATG27 to form a cycling complex for trafficking to the PAS. Interacts (via N-terminus) with ATG11, required for recruitment of ATG9 to the PAS for the Cvt pathway during nutrient-rich conditions. Interacts (via N-terminus) with ATG17; required for recruitment to the PAS during autophagy and starved conditions. Interacts with ATG2 and ATG18; required for the retrieval of ATG9 from the PAS to the cytoplasmic pool. Interacts with ATG41. Interacts with the conserved oligomeric Golgi (COG) complex subunits COG3 and COG4. Interacts with TRS85. Post-translationally, phosphorylated by ATG1; phosphorylation is required for autophagy and cytoplasm to vacuole transport (Cvt) vesicle formation. Phosphorylation by ATG1 regulates ATG18 interaction and preautophagosome elongation. Phosphorylation at Ser-122 is required for selective autophagy by regulating anterograde trafficking and interaction with ATG23 and ATG27. Phosphorylation at Ser-122 prevents ubiquitination by the SCF(MET30) complex. In terms of processing, ubiquitinated by the SCF(MET30) complex in normal conditions, leading to its degradation by the proteasome, thereby preventing inappropriate induction of autophagy. Ubiquitination by the SCF(MET30) complex is prevented by phosphorylation at Ser-122.

The protein resides in the preautophagosomal structure membrane. The protein localises to the cytoplasmic vesicle membrane. Its subcellular location is the golgi apparatus membrane. It is found in the endoplasmic reticulum membrane. It localises to the mitochondrion membrane. The catalysed reaction is a 1,2-diacyl-sn-glycero-3-phosphocholine(in) = a 1,2-diacyl-sn-glycero-3-phosphocholine(out). It catalyses the reaction a 1,2-diacyl-sn-glycero-3-phospho-L-serine(in) = a 1,2-diacyl-sn-glycero-3-phospho-L-serine(out). The enzyme catalyses a 1,2-diacyl-sn-glycero-3-phosphoethanolamine(in) = a 1,2-diacyl-sn-glycero-3-phosphoethanolamine(out). It carries out the reaction a 1,2-diacyl-sn-glycero-3-phospho-(1D-myo-inositol-3-phosphate)(in) = a 1,2-diacyl-sn-glycero-3-phospho-(1D-myo-inositol-3-phosphate)(out). Functionally, phospholipid scramblase involved in autophagy and cytoplasm to vacuole transport (Cvt) vesicle formation. Cycles between the preautophagosomal structure/phagophore assembly site (PAS) and the cytoplasmic vesicle pool and supplies membrane for the growing autophagosome. Lipid scramblase activity plays a key role in preautophagosomal structure/phagophore assembly by distributing the phospholipids that arrive through ATG2 from the cytoplasmic to the luminal leaflet of the bilayer, thereby driving autophagosomal membrane expansion. Required for mitophagy. Also involved in endoplasmic reticulum-specific autophagic process and is essential for the survival of cells subjected to severe ER stress. Different machineries are required for anterograde trafficking to the PAS during either the Cvt pathway or bulk autophagy and for retrograde trafficking. Recruits vesicle-tethering proteins TRS85 and YPT1 to the autophagosome formation site. Also recruits ATG23 and ATG8 to the PAS. In Saccharomyces cerevisiae (strain YJM789) (Baker's yeast), this protein is Autophagy-related protein 9.